The sequence spans 201 residues: Small ribosomal subunit protein uS10m (201 aa).

Belongs to the universal ribosomal protein uS10 family. As to quaternary structure, component of the mitochondrial small ribosomal subunit (mt-SSU). Mature mammalian 55S mitochondrial ribosomes consist of a small (28S) and a large (39S) subunit. The 28S small subunit contains a 12S ribosomal RNA (12S mt-rRNA) and 30 different proteins. The 39S large subunit contains a 16S rRNA (16S mt-rRNA), a copy of mitochondrial valine transfer RNA (mt-tRNA(Val)), which plays an integral structural role, and 52 different proteins.

It is found in the mitochondrion. The polypeptide is Small ribosomal subunit protein uS10m (MRPS10) (Homo sapiens (Human)).